Consider the following 207-residue polypeptide: Outer-membrane lipoprotein LolB (207 aa).

Residues 1 to 23 form the signal peptide; that stretch reads MINLRRFTKFTLAGLTALSLLGG. C24 carries the N-palmitoyl cysteine lipid modification. A lipid anchor (S-diacylglycerol cysteine) is attached at C24.

This sequence belongs to the LolB family. As to quaternary structure, monomer.

The protein resides in the cell outer membrane. In terms of biological role, plays a critical role in the incorporation of lipoproteins in the outer membrane after they are released by the LolA protein. The sequence is that of Outer-membrane lipoprotein LolB from Shewanella amazonensis (strain ATCC BAA-1098 / SB2B).